The sequence spans 248 residues: 14-3-3-like protein 1 (248 aa).

It belongs to the 14-3-3 family. Interacts with daf-16 and sir-2.1. Interacts with atgl-1. Interacts with hcf-1.

The protein resides in the cytoplasm. It is found in the nucleus. In terms of biological role, required to modulate lifespan, in concert with hcf-1, acting redundantly with 14-3-3-like protein ftt-2. This Caenorhabditis elegans protein is 14-3-3-like protein 1 (par-5).